The following is an 875-amino-acid chain: MSKSTAEIRQAFLDFFHSKGHQVVDSSSLVPNNDPTLLFTNAGMNQFKDVFLGLDKRSYVRATTSQRCVRAGGKHNDLENVGYTARHHTFFEMLGNFSFGDYFKHDAIRYAWELLTSPQWFNLPKEKLWVTVYATDDEAYGIWADEVGVPRERIIRIGDNKGGPYASDNFWQMGETGPCGPCTEIFFDHGEHIAGGPPGSPDEDGDRYIEIWNLVFMQFNRQVDGTMLPLPKPSVDTGMGLERVSAVLQHVNSNYDIDLFKTLIDAVAKAVGTTDLTNKSLRVIADHIRSCAFLISDGVMPSNENRGYVLRRIIRRAARHGNMLGATDAFFYKLVAPLIEVMGPAAEELKKQQSVVEQALKMEEEQFARTLERGLSLLDEEIKNLKGDTLDGETAFRLYDTYGFPVDLTADVCRERGLKVDEEGFEAAMTAQRQRARDASGFGVDYNSLIRVDENTPFCGYEKTQQQAKVIALYHNGNAVDQIAAGDEAVVILNETPFYGESGGQVGDQGELKNAGVSFAVQDTQKYGQAIGHVGKLTQGMLRVNDSVDANVDSQRRDRIRLNHSATHLLHAALRQVLGVHVAQKGSLVNDSYLRFDFSHTEAMKPEQIRQVEDIVNAQIRRNLTVQTDVMALDDARAKGAMALFGEKYDDHVRVLSMGDFSIELCGGTHASRTGDIGLFQIISESGTAAGVRRIEATTGENALSALHRQSDVLQDIAQLLKGDSHNLTDKVRSVLDRSRALEKELQQLKAQQAAQESSSLSGKATEINGVKLLVTQLDNVDPKLLRTMVDDLKNQLGSAVIVLGTAAEGRVSLISGVTKDLTDRVKAGELVGFVAQQVGGKGGGRPDMAQAGGSDVSALPAALASVESWVAAKL.

H564, H568, C666, and H670 together coordinate Zn(2+).

Belongs to the class-II aminoacyl-tRNA synthetase family. In terms of assembly, homotetramer. Zn(2+) serves as cofactor.

The protein resides in the cytoplasm. It carries out the reaction tRNA(Ala) + L-alanine + ATP = L-alanyl-tRNA(Ala) + AMP + diphosphate. In terms of biological role, catalyzes the attachment of alanine to tRNA(Ala) in a two-step reaction: alanine is first activated by ATP to form Ala-AMP and then transferred to the acceptor end of tRNA(Ala). Also edits incorrectly charged Ser-tRNA(Ala) and Gly-tRNA(Ala) via its editing domain. The polypeptide is Alanine--tRNA ligase (Pectobacterium atrosepticum (strain SCRI 1043 / ATCC BAA-672) (Erwinia carotovora subsp. atroseptica)).